A 342-amino-acid chain; its full sequence is N-acetyl-gamma-glutamyl-phosphate reductase (342 aa).

C149 is a catalytic residue.

Belongs to the NAGSA dehydrogenase family. Type 1 subfamily.

Its subcellular location is the cytoplasm. The enzyme catalyses N-acetyl-L-glutamate 5-semialdehyde + phosphate + NADP(+) = N-acetyl-L-glutamyl 5-phosphate + NADPH + H(+). It participates in amino-acid biosynthesis; L-arginine biosynthesis; N(2)-acetyl-L-ornithine from L-glutamate: step 3/4. In terms of biological role, catalyzes the NADPH-dependent reduction of N-acetyl-5-glutamyl phosphate to yield N-acetyl-L-glutamate 5-semialdehyde. This Nitrosospira multiformis (strain ATCC 25196 / NCIMB 11849 / C 71) protein is N-acetyl-gamma-glutamyl-phosphate reductase.